Consider the following 335-residue polypeptide: Ketol-acid reductoisomerase (NADP(+)) 2 (335 aa).

Positions 1 to 180 constitute a KARI N-terminal Rossmann domain; that stretch reads MKTYYEKDAN…GCTRAGVIET (180 aa). Residues 24–27, arginine 47, serine 51, and 81–84 contribute to the NADP(+) site; these read YGSQ and DEQQ. The active site involves histidine 106. Glycine 132 serves as a coordination point for NADP(+). The KARI C-terminal knotted domain maps to 181-326; that stretch reads TFQEETETDL…AELREMMSWI (146 aa). Residues aspartate 189, glutamate 193, glutamate 225, and glutamate 229 each contribute to the Mg(2+) site. Serine 250 contacts substrate.

The protein belongs to the ketol-acid reductoisomerase family. The cofactor is Mg(2+).

The enzyme catalyses (2R)-2,3-dihydroxy-3-methylbutanoate + NADP(+) = (2S)-2-acetolactate + NADPH + H(+). The catalysed reaction is (2R,3R)-2,3-dihydroxy-3-methylpentanoate + NADP(+) = (S)-2-ethyl-2-hydroxy-3-oxobutanoate + NADPH + H(+). Its pathway is amino-acid biosynthesis; L-isoleucine biosynthesis; L-isoleucine from 2-oxobutanoate: step 2/4. The protein operates within amino-acid biosynthesis; L-valine biosynthesis; L-valine from pyruvate: step 2/4. Functionally, involved in the biosynthesis of branched-chain amino acids (BCAA). Catalyzes an alkyl-migration followed by a ketol-acid reduction of (S)-2-acetolactate (S2AL) to yield (R)-2,3-dihydroxy-isovalerate. In the isomerase reaction, S2AL is rearranged via a Mg-dependent methyl migration to produce 3-hydroxy-3-methyl-2-ketobutyrate (HMKB). In the reductase reaction, this 2-ketoacid undergoes a metal-dependent reduction by NADPH to yield (R)-2,3-dihydroxy-isovalerate. The sequence is that of Ketol-acid reductoisomerase (NADP(+)) 2 from Bacillus cereus (strain ZK / E33L).